Consider the following 205-residue polypeptide: Superoxide dismutase [Mn] (205 aa).

4 residues coordinate Mn(2+): His30, His78, Asp166, and His170.

Belongs to the iron/manganese superoxide dismutase family. In terms of assembly, homodimer. The cofactor is Mn(2+).

It carries out the reaction 2 superoxide + 2 H(+) = H2O2 + O2. Its function is as follows. Destroys superoxide anion radicals which are normally produced within the cells and which are toxic to biological systems. The chain is Superoxide dismutase [Mn] (sodA) from Chlamydia muridarum (strain MoPn / Nigg).